We begin with the raw amino-acid sequence, 513 residues long: ATP synthase subunit alpha (513 aa).

Residue 169–176 (GDRQCGKT) coordinates ATP.

The protein belongs to the ATPase alpha/beta chains family. In terms of assembly, F-type ATPases have 2 components, CF(1) - the catalytic core - and CF(0) - the membrane proton channel. CF(1) has five subunits: alpha(3), beta(3), gamma(1), delta(1), epsilon(1). CF(0) has three main subunits: a(1), b(2) and c(9-12). The alpha and beta chains form an alternating ring which encloses part of the gamma chain. CF(1) is attached to CF(0) by a central stalk formed by the gamma and epsilon chains, while a peripheral stalk is formed by the delta and b chains.

The protein resides in the cell inner membrane. The enzyme catalyses ATP + H2O + 4 H(+)(in) = ADP + phosphate + 5 H(+)(out). Its function is as follows. Produces ATP from ADP in the presence of a proton gradient across the membrane. The alpha chain is a regulatory subunit. The sequence is that of ATP synthase subunit alpha from Burkholderia orbicola (strain AU 1054).